Reading from the N-terminus, the 149-residue chain is Calmodulin (149 aa).

At Ala2 the chain carries N-acetylalanine. 4 consecutive EF-hand domains span residues 8-43, 44-79, 81-116, and 117-149; these read EQIA…LGQN, PTEA…KMKD, DTEE…LGEK, and LTDE…MMAK. 14 residues coordinate Ca(2+): Asp21, Asp23, Asp25, Thr27, Glu32, Asp57, Asp59, Asn61, Thr63, Glu68, Asp94, Asp96, Asn98, and Glu105. Lys116 is modified (N6,N6,N6-trimethyllysine). Ca(2+) contacts are provided by Asp130, Asp132, Asp134, His136, and Glu141.

It belongs to the calmodulin family.

Calmodulin mediates the control of a large number of enzymes, ion channels and other proteins by Ca(2+). Among the enzymes to be stimulated by the calmodulin-Ca(2+) complex are a number of protein kinases and phosphatases. The chain is Calmodulin from Stylonychia lemnae (Ciliate).